Consider the following 1409-residue polypeptide: DNA-directed RNA polymerase subunit beta' (1409 aa).

The Zn(2+) site is built by Cys70, Cys72, Cys85, and Cys88. Residues Asp458, Asp460, and Asp462 each contribute to the Mg(2+) site. Residues Cys813, Cys887, Cys894, and Cys897 each coordinate Zn(2+).

The protein belongs to the RNA polymerase beta' chain family. In terms of assembly, the RNAP catalytic core consists of 2 alpha, 1 beta, 1 beta' and 1 omega subunit. When a sigma factor is associated with the core the holoenzyme is formed, which can initiate transcription. Mg(2+) is required as a cofactor. The cofactor is Zn(2+).

It carries out the reaction RNA(n) + a ribonucleoside 5'-triphosphate = RNA(n+1) + diphosphate. In terms of biological role, DNA-dependent RNA polymerase catalyzes the transcription of DNA into RNA using the four ribonucleoside triphosphates as substrates. The chain is DNA-directed RNA polymerase subunit beta' from Acidovorax ebreus (strain TPSY) (Diaphorobacter sp. (strain TPSY)).